We begin with the raw amino-acid sequence, 870 residues long: DNA-directed RNA polymerase subunit Rpo1N (870 aa).

Residues cysteine 60, cysteine 63, cysteine 70, histidine 73, cysteine 100, cysteine 103, cysteine 146, and cysteine 149 each contribute to the Zn(2+) site. Mg(2+) is bound by residues aspartate 451, aspartate 453, and aspartate 455.

Belongs to the RNA polymerase beta' chain family. Part of the RNA polymerase complex. Mg(2+) serves as cofactor. Requires Zn(2+) as cofactor.

The protein localises to the cytoplasm. The catalysed reaction is RNA(n) + a ribonucleoside 5'-triphosphate = RNA(n+1) + diphosphate. Its function is as follows. DNA-dependent RNA polymerase (RNAP) catalyzes the transcription of DNA into RNA using the four ribonucleoside triphosphates as substrates. Forms the clamp head domain. This is DNA-directed RNA polymerase subunit Rpo1N from Methanothermobacter thermautotrophicus (strain ATCC 29096 / DSM 1053 / JCM 10044 / NBRC 100330 / Delta H) (Methanobacterium thermoautotrophicum).